Reading from the N-terminus, the 210-residue chain is Ribosomal RNA large subunit methyltransferase E (210 aa).

Residues G61, W63, D81, D97, and D122 each coordinate S-adenosyl-L-methionine. Catalysis depends on K162, which acts as the Proton acceptor. Basic and acidic residues predominate over residues 187–196; sequence KPEASRKRSP. The tract at residues 187–210 is disordered; that stretch reads KPEASRKRSPEVYALGQGKRAHMK.

This sequence belongs to the class I-like SAM-binding methyltransferase superfamily. RNA methyltransferase RlmE family.

Its subcellular location is the cytoplasm. It catalyses the reaction uridine(2552) in 23S rRNA + S-adenosyl-L-methionine = 2'-O-methyluridine(2552) in 23S rRNA + S-adenosyl-L-homocysteine + H(+). In terms of biological role, specifically methylates the uridine in position 2552 of 23S rRNA at the 2'-O position of the ribose in the fully assembled 50S ribosomal subunit. The chain is Ribosomal RNA large subunit methyltransferase E from Stenotrophomonas maltophilia (strain R551-3).